The following is a 147-amino-acid chain: MYPAHLLVLLAVCVSLLGASDIPPQPLNLYQFSNMIQCANHGRRPTKHYMDYGCYCGKGGSGTPVDELDRCCKIHDDCYGEAEKSQNCAPYWTWYTWKCGSDGPQCDDSETGCQRSVCECDAIAAKCFAKAPYNDANWDIDTETRCQ.

An N-terminal signal peptide occupies residues 1 to 19 (MYPAHLLVLLAVCVSLLGA). The propeptide occupies 20–27 (SDIPPQPL). 7 disulfide bridges follow: cysteine 38–cysteine 99, cysteine 54–cysteine 146, cysteine 56–cysteine 72, cysteine 71–cysteine 127, cysteine 78–cysteine 120, cysteine 88–cysteine 113, and cysteine 106–cysteine 118. 3 residues coordinate Ca(2+): tyrosine 55, glycine 57, and glycine 59. Histidine 75 is an active-site residue. Aspartate 76 contributes to the Ca(2+) binding site. Aspartate 121 is a catalytic residue.

Belongs to the phospholipase A2 family. Group I subfamily. D49 sub-subfamily. Ca(2+) serves as cofactor. Expressed by the venom gland.

It localises to the secreted. The catalysed reaction is a 1,2-diacyl-sn-glycero-3-phosphocholine + H2O = a 1-acyl-sn-glycero-3-phosphocholine + a fatty acid + H(+). Snake venom phospholipase A2 (PLA2) that inhibits collagen-induced platelet aggregation. PLA2 catalyzes the calcium-dependent hydrolysis of the 2-acyl groups in 3-sn-phosphoglycerides. This is Acidic phospholipase A2 S7-48J from Austrelaps superbus (Lowland copperhead snake).